Reading from the N-terminus, the 230-residue chain is ATP-dependent dethiobiotin synthetase BioD (230 aa).

12-17 lines the ATP pocket; that stretch reads DVGKTV. Thr-16 provides a ligand contact to Mg(2+). Lys-37 is a catalytic residue. Thr-41 contacts substrate. ATP-binding positions include Asp-49, 108 to 111, 168 to 169, and 198 to 200; these read EGAG, GS, and PEG. Asp-49 and Glu-108 together coordinate Mg(2+).

The protein belongs to the dethiobiotin synthetase family. Homodimer. Requires Mg(2+) as cofactor.

Its subcellular location is the cytoplasm. It catalyses the reaction (7R,8S)-7,8-diammoniononanoate + CO2 + ATP = (4R,5S)-dethiobiotin + ADP + phosphate + 3 H(+). Its pathway is cofactor biosynthesis; biotin biosynthesis; biotin from 7,8-diaminononanoate: step 1/2. Functionally, catalyzes a mechanistically unusual reaction, the ATP-dependent insertion of CO2 between the N7 and N8 nitrogen atoms of 7,8-diaminopelargonic acid (DAPA, also called 7,8-diammoniononanoate) to form a ureido ring. The sequence is that of ATP-dependent dethiobiotin synthetase BioD from Corynebacterium kroppenstedtii (strain DSM 44385 / JCM 11950 / CIP 105744 / CCUG 35717).